A 743-amino-acid chain; its full sequence is Alpha-N-acetylglucosaminidase (743 aa).

A signal peptide spans 1–23; sequence MEAVAVAAAVGVLLLAGAGGAAG. N261, N272, N435, N503, N526, and N532 each carry an N-linked (GlcNAc...) asparagine glycan.

It belongs to the glycosyl hydrolase 89 family. As to quaternary structure, monomer and homodimer. In terms of tissue distribution, liver, ovary, peripheral blood leukocytes, testis, prostate, spleen, colon, lung, placenta and kidney.

It is found in the lysosome. It catalyses the reaction Hydrolysis of terminal non-reducing N-acetyl-D-glucosamine residues in N-acetyl-alpha-D-glucosaminides.. Involved in the degradation of heparan sulfate. In Homo sapiens (Human), this protein is Alpha-N-acetylglucosaminidase (NAGLU).